Reading from the N-terminus, the 239-residue chain is Small ribosomal subunit protein uS2 (239 aa).

This sequence belongs to the universal ribosomal protein uS2 family.

This is Small ribosomal subunit protein uS2 from Francisella tularensis subsp. tularensis (strain FSC 198).